The following is a 152-amino-acid chain: Nucleoside diphosphate kinase (152 aa).

ATP-binding residues include lysine 11, phenylalanine 59, arginine 87, threonine 93, arginine 104, and asparagine 114. Residue histidine 117 is the Pros-phosphohistidine intermediate of the active site.

Belongs to the NDK family. In terms of assembly, homotetramer. Mg(2+) serves as cofactor.

It localises to the cytoplasm. It carries out the reaction dZDP + ATP = dZTP + ADP. It catalyses the reaction a 2'-deoxyribonucleoside 5'-diphosphate + ATP = a 2'-deoxyribonucleoside 5'-triphosphate + ADP. The catalysed reaction is a ribonucleoside 5'-diphosphate + ATP = a ribonucleoside 5'-triphosphate + ADP. It participates in purine metabolism. In terms of biological role, major role in the synthesis of nucleoside triphosphates other than ATP. The ATP gamma phosphate is transferred to the NDP beta phosphate via a ping-pong mechanism, using a phosphorylated active-site intermediate. Functionally, (Microbial infection) Catalyzes the phosphorylation of dZDP to dZTP, when the bacterium is infected by a phage that produces the substrate for the synthesis of dZTP (2- amino-2'-deoxyadenosine 5'-triphosphate), which is then used by the phage as a DNA polymerase substrate. This chain is Nucleoside diphosphate kinase, found in Synechococcus sp. (strain WH7803).